The chain runs to 365 residues: WAT1-related protein At1g01070 (365 aa).

Transmembrane regions (helical) follow at residues 14 to 34 (YSPVIVMVMSNVAMGSVNALV), 46 to 66 (VIGAYRMAISALILVPFAYVL), 83 to 103 (FVSGLLGASLMQFFFLLGLSY), 107 to 127 (TVSCALVSMLPAITFALALIF), 139 to 159 (AGMLKVIGTLICISGALFLTF), 189 to 209 (WLLGCLYLTIGTVLLSLWMLF), 221 to 241 (YSSTCLMSIFAAFQCALLSLY), 255 to 275 (FVITVIIYAGVVGQAMTTVAT), 285 to 305 (VFASAFFPLTLISATLFDFLI), and 310 to 330 (LYLGSVIGSLVTITGLYMFLW). The EamA 1 domain occupies 27-157 (MGSVNALVKK…LICISGALFL (131 aa)). An EamA 2 domain is found at 223–329 (STCLMSIFAA…VTITGLYMFL (107 aa)). Polar residues predominate over residues 340-356 (TALSSGMDNEAQYTTPN). The tract at residues 340–365 (TALSSGMDNEAQYTTPNKDNDSKSPV) is disordered.

This sequence belongs to the drug/metabolite transporter (DMT) superfamily. Plant drug/metabolite exporter (P-DME) (TC 2.A.7.4) family.

It is found in the membrane. This Arabidopsis thaliana (Mouse-ear cress) protein is WAT1-related protein At1g01070.